The following is a 304-amino-acid chain: Putative dihydroorotate dehydrogenase A (fumarate) (304 aa).

FMN is bound by residues Ser-21 and 45–46 (KS). Substrate-binding positions include Lys-45, 69–73 (NAVGL), and Asn-129. FMN is bound at residue Asn-129. The active-site Nucleophile is Cys-132. Residues Lys-168 and Ile-194 each coordinate FMN. 195 to 196 (NT) provides a ligand contact to substrate. FMN is bound by residues Gly-220, 246–247 (GG), and 268–269 (GS).

It belongs to the dihydroorotate dehydrogenase family. Type 1 subfamily. Homodimer. Requires FMN as cofactor.

The protein localises to the cytoplasm. The catalysed reaction is (S)-dihydroorotate + fumarate = orotate + succinate. It participates in pyrimidine metabolism; UMP biosynthesis via de novo pathway. Catalyzes the conversion of dihydroorotate to orotate with fumarate as the electron acceptor. The polypeptide is Putative dihydroorotate dehydrogenase A (fumarate) (pyrD) (Pediococcus pentosaceus (strain ATCC 25745 / CCUG 21536 / LMG 10740 / 183-1w)).